We begin with the raw amino-acid sequence, 371 residues long: Neuropeptide Y receptor type 6 (371 aa).

Over 1–31 (MEVSLNDPASNKTSAKSNSSAFFYFESCQSP) the chain is Extracellular. Residues N11 and N18 are each glycosylated (N-linked (GlcNAc...) asparagine). A helical transmembrane segment spans residues 32 to 52 (SLALLLLLIAYTVVLIMGICG). The Cytoplasmic segment spans residues 53–72 (NLSLITIIFKKQREAQNVTN). A helical membrane pass occupies residues 73 to 93 (ILIANLSLSDILVCVMCIPFT). Residues 94–111 (AIYTLMDRWIFGNTMCKL) are Extracellular-facing. Residues C109 and C196 are joined by a disulfide bond. The chain crosses the membrane as a helical span at residues 112 to 132 (TSYVQSVSISVSIFSLVLIAI). The Cytoplasmic portion of the chain corresponds to 133-150 (ERYQLIVNPRGWKPSASH). A helical transmembrane segment spans residues 151-171 (AYWGIMLIWLFSLLLSIPLLL). The Extracellular segment spans residues 172–213 (SYHLTDEPFRNLSLPTDLYSHHVVCVEHWPSKTNQLLYSTSL). N182 carries N-linked (GlcNAc...) asparagine glycosylation. The chain crosses the membrane as a helical span at residues 214–234 (IMLQYFVPLGFMFICYLKIVI). Residues 235–263 (CLHKRNSKIDRRRENESRLTENKRINTML) lie on the Cytoplasmic side of the membrane. The helical transmembrane segment at 264–284 (ISIVVTFAACWLPLNTFNVIF) threads the bilayer. At 285 to 297 (DWYHEVLMSCHHD) the chain is on the extracellular side. Residues 298–318 (LVFAICHLVAMVSTCINPLFY) form a helical membrane-spanning segment. Residues 319-371 (GFLNRNFQKDLVVLIHHCLCFALRERYENIAISTLHTDESKGSLRVAHIPAGI) are Cytoplasmic-facing. The S-palmitoyl cysteine moiety is linked to residue C336.

This sequence belongs to the G-protein coupled receptor 1 family. As to expression, expressed in hippocampus, striatum, hypothalamus, cerebellum, small intestine, colon and adrenal gland.

It localises to the cell membrane. Its function is as follows. Receptor for neuropeptide Y and peptide YY. The activity of this receptor is mediated by G proteins that inhibit adenylate cyclase activity. This is Neuropeptide Y receptor type 6 (NPY6R) from Oryctolagus cuniculus (Rabbit).